Reading from the N-terminus, the 223-residue chain is Zinc-finger homeodomain protein 12 (223 aa).

The segment covering 1–20 has biased composition (polar residues); it reads MSSLSKPNRQFLSPTTNNQD. The segment at 1 to 24 is disordered; that stretch reads MSSLSKPNRQFLSPTTNNQDTGRE. Residues 37–88 form a ZF-HD dimerization-type; degenerate zinc finger; the sequence is YNECLKNHAVSLGGHALDGCGEFTPKSTTILTDPPSLRCDACGCHRNFHRRS. A DNA-binding region (homeobox; atypical) is located at residues 147-204; it reads KKHKRTKFTAEQKVKMRGFAERAGWKINGWDEKWVREFCSEVGIERKVLKVWIHNNKY.

As to quaternary structure, homo- and heterodimer with other ZFHD proteins. Interacts with ZHD11.

The protein localises to the nucleus. Its function is as follows. Putative transcription factor. The protein is Zinc-finger homeodomain protein 12 (ZHD12) of Arabidopsis thaliana (Mouse-ear cress).